A 1386-amino-acid polypeptide reads, in one-letter code: DNA-directed RNA polymerase subunit beta' (1386 aa).

Residues Cys75, Cys77, Cys90, and Cys93 each contribute to the Zn(2+) site. Positions 466, 468, and 470 each coordinate Mg(2+). 4 residues coordinate Zn(2+): Cys809, Cys883, Cys890, and Cys893.

It belongs to the RNA polymerase beta' chain family. In terms of assembly, the RNAP catalytic core consists of 2 alpha, 1 beta, 1 beta' and 1 omega subunit. When a sigma factor is associated with the core the holoenzyme is formed, which can initiate transcription. Mg(2+) is required as a cofactor. Zn(2+) serves as cofactor.

The enzyme catalyses RNA(n) + a ribonucleoside 5'-triphosphate = RNA(n+1) + diphosphate. Functionally, DNA-dependent RNA polymerase catalyzes the transcription of DNA into RNA using the four ribonucleoside triphosphates as substrates. This Oleidesulfovibrio alaskensis (strain ATCC BAA-1058 / DSM 17464 / G20) (Desulfovibrio alaskensis) protein is DNA-directed RNA polymerase subunit beta'.